Here is a 320-residue protein sequence, read N- to C-terminus: GTPase Era (320 aa).

Residues 25–193 (HCGFIAIVGR…RKHVRNHLPK (169 aa)) form the Era-type G domain. Residues 33–40 (GRPNVGKS) are G1. 33-40 (GRPNVGKS) lines the GTP pocket. The segment at 59–63 (QTTRH) is G2. A G3 region spans residues 80 to 83 (DTPG). Residues 80–84 (DTPGL) and 142–145 (NKVD) each bind GTP. Residues 142–145 (NKVD) form a G4 region. Positions 172–174 (ISA) are G5. The 87-residue stretch at 216-302 (VREKLMRFTG…YLETWVKVKS (87 aa)) folds into the KH type-2 domain.

Belongs to the TRAFAC class TrmE-Era-EngA-EngB-Septin-like GTPase superfamily. Era GTPase family. As to quaternary structure, monomer.

Its subcellular location is the cytoplasm. It is found in the cell inner membrane. Its function is as follows. An essential GTPase that binds both GDP and GTP, with rapid nucleotide exchange. Plays a role in 16S rRNA processing and 30S ribosomal subunit biogenesis and possibly also in cell cycle regulation and energy metabolism. This Vibrio parahaemolyticus serotype O3:K6 (strain RIMD 2210633) protein is GTPase Era.